We begin with the raw amino-acid sequence, 1836 residues long: U3 small nucleolar RNA-associated protein 10 (1836 aa).

Residues 245 to 283 (EVVGFLLLPSKYETLRNIDVDTRLTAYSIIAVLASIIPI) form an HEAT 1 repeat. A disordered region spans residues 453 to 473 (SNSSVRDSDDVEFDAGEEDNN). Acidic residues predominate over residues 461 to 473 (DDVEFDAGEEDNN). HEAT repeat units lie at residues 585-623 (PLDL…TTTS) and 813-850 (VENR…DQDL). The tract at residues 863-883 (QIPEQGPAKRRRRSSSSTKQA) is disordered. 2 helical membrane-spanning segments follow: residues 998 to 1018 (LLLV…HSVM) and 1085 to 1105 (LFTY…LLFL). HEAT repeat units follow at residues 1333 to 1372 (ESVL…KFGA), 1749 to 1787 (ETLV…KMGE), and 1790 to 1828 (LTYL…NVLG).

This sequence belongs to the HEATR1/UTP10 family. Component of the ribosomal small subunit (SSU) processome.

Its subcellular location is the nucleus. It is found in the nucleolus. The protein localises to the membrane. In terms of biological role, involved in nucleolar processing of pre-18S ribosomal RNA. Involved in ribosome biosynthesis. In Scheffersomyces stipitis (strain ATCC 58785 / CBS 6054 / NBRC 10063 / NRRL Y-11545) (Yeast), this protein is U3 small nucleolar RNA-associated protein 10.